A 297-amino-acid chain; its full sequence is Phosphoribosylaminoimidazole-succinocarboxamide synthase (297 aa).

It belongs to the SAICAR synthetase family.

It catalyses the reaction 5-amino-1-(5-phospho-D-ribosyl)imidazole-4-carboxylate + L-aspartate + ATP = (2S)-2-[5-amino-1-(5-phospho-beta-D-ribosyl)imidazole-4-carboxamido]succinate + ADP + phosphate + 2 H(+). The protein operates within purine metabolism; IMP biosynthesis via de novo pathway; 5-amino-1-(5-phospho-D-ribosyl)imidazole-4-carboxamide from 5-amino-1-(5-phospho-D-ribosyl)imidazole-4-carboxylate: step 1/2. The polypeptide is Phosphoribosylaminoimidazole-succinocarboxamide synthase (Mycobacteroides abscessus (strain ATCC 19977 / DSM 44196 / CCUG 20993 / CIP 104536 / JCM 13569 / NCTC 13031 / TMC 1543 / L948) (Mycobacterium abscessus)).